The primary structure comprises 76 residues: Small ribosomal subunit protein bS18 (76 aa).

It belongs to the bacterial ribosomal protein bS18 family. Part of the 30S ribosomal subunit. Forms a tight heterodimer with protein bS6.

Binds as a heterodimer with protein bS6 to the central domain of the 16S rRNA, where it helps stabilize the platform of the 30S subunit. The chain is Small ribosomal subunit protein bS18 from Neisseria gonorrhoeae (strain ATCC 700825 / FA 1090).